We begin with the raw amino-acid sequence, 134 residues long: Arginine decarboxylase proenzyme (134 aa).

Ser82 (schiff-base intermediate with substrate; via pyruvic acid) is an active-site residue. At Ser82 the chain carries Pyruvic acid (Ser); by autocatalysis. The active-site Proton acceptor; for processing activity is the His87. The active-site Proton donor; for catalytic activity is Cys102.

Belongs to the prokaryotic AdoMetDC family. Type 1 subfamily. As to quaternary structure, heterooctamer of four alpha and four beta chains arranged as a tetramer of alpha/beta heterodimers. Pyruvate serves as cofactor. In terms of processing, is synthesized initially as an inactive proenzyme. Formation of the active enzyme involves a self-maturation process in which the active site pyruvoyl group is generated from an internal serine residue via an autocatalytic post-translational modification. Two non-identical subunits are generated from the proenzyme in this reaction, and the pyruvate is formed at the N-terminus of the alpha chain, which is derived from the carboxyl end of the proenzyme. The post-translation cleavage follows an unusual pathway, termed non-hydrolytic serinolysis, in which the side chain hydroxyl group of the serine supplies its oxygen atom to form the C-terminus of the beta chain, while the remainder of the serine residue undergoes an oxidative deamination to produce ammonia and the pyruvoyl group blocking the N-terminus of the alpha chain.

The catalysed reaction is L-arginine + H(+) = agmatine + CO2. It functions in the pathway amine and polyamine biosynthesis; agmatine biosynthesis; agmatine from L-arginine: step 1/1. In terms of biological role, specifically catalyzes the decarboxylation of L-arginine to agmatine. Has no S-adenosylmethionine decarboxylase (AdoMetDC) activity. In Caldivirga maquilingensis (strain ATCC 700844 / DSM 13496 / JCM 10307 / IC-167), this protein is Arginine decarboxylase proenzyme.